Consider the following 186-residue polypeptide: UPF0398 protein BPUM_1952 (186 aa).

The protein belongs to the UPF0398 family.

This is UPF0398 protein BPUM_1952 from Bacillus pumilus (strain SAFR-032).